A 355-amino-acid polypeptide reads, in one-letter code: Gentisate 1,2-dioxygenase (355 aa).

Residues 106–174 enclose the Cupin type-2 domain; it reads MQLLLPGEWA…GNEPVVWLDV (69 aa).

Belongs to the gentisate 1,2-dioxygenase family.

The enzyme catalyses 2,5-dihydroxybenzoate + O2 = 3-maleylpyruvate + H(+). It functions in the pathway aromatic compound metabolism; naphthalene degradation. Catalyzes the oxygen-dependent ring fission of gentisate between the carboxyl and proximal hydroxyl groups at positions 1 and 2 of the aromatic ring to form maleylpyruvate. Can also catalyze oxidation of alkyl- and halogenated gentisates. Exhibits higher affinity for 3-substituted gentisates than for gentisate but has higher activity with gentisate. This Ralstonia sp protein is Gentisate 1,2-dioxygenase.